The primary structure comprises 569 residues: Peptide transporter PTR_C (569 aa).

The span at 1-25 (MSQNVDEKVVHDDASVIRSVDRSES) shows a compositional bias: basic and acidic residues. The segment at 1-43 (MSQNVDEKVVHDDASVIRSVDRSESDSYPDSVSPEGAEPSEEE) is disordered. Residues 54–74 (VPLACWLVAIVELAERFSYYG) traverse the membrane as a helical segment. Asparagine 98 carries an N-linked (GlcNAc...) asparagine glycan. 3 helical membrane passes run 104–124 (ALSY…AWVA), 134–154 (ISIF…TSLP), and 159–179 (NTSL…TGGV). N-linked (GlcNAc...) asparagine glycosylation occurs at asparagine 212. The next 8 helical transmembrane spans lie at 215 to 235 (IQNV…SVIA), 245 to 265 (FWAA…ALFL), 322 to 342 (ALYA…YGQM), 366 to 386 (IDSI…YPFI), 398 to 418 (IFWG…LQHF), 444 to 464 (VALQ…ASIT), 479 to 499 (SFIM…GIAL), and 510 to 530 (WTYT…WFLF).

This sequence belongs to the major facilitator superfamily. Proton-dependent oligopeptide transporter (POT/PTR) (TC 2.A.17) family.

It is found in the cell membrane. The enzyme catalyses a dipeptide(out) + H(+)(out) = a dipeptide(in) + H(+)(in). It carries out the reaction an L-amino acid tripeptide(out) + H(+)(out) = an L-amino acid tripeptide(in) + H(+)(in). Peptide transporter that exploits the inwardly directed proton motive force to facilitate the cellular uptake of di/tripeptides. Shows strong uptake specificity towards the dipeptides Tyr-Phe and Leu-Gly and the tripeptide Phe-Gly-Gly, when compared to PTR_A and PTR_B. Also able to import peptide-based antifungals such as the peptide-nucleoside drug nikkomycin Z as well as the glucosamine-6-phosphate synthase inhibitor, L-norvalyl-N3-(4-methoxyfumaroyl)-L-2,3-diaminopropionoic acid (Nva-FMDP). In Candidozyma auris (Yeast), this protein is Peptide transporter PTR_C.